Consider the following 234-residue polypeptide: uncharacterized protein (234 aa).

Residues Gln-65–Asn-89 are disordered. The segment at Cys-185–Lys-220 adopts an RING-type zinc-finger fold.

The protein belongs to the IIV-6 175R/332L family.

This is an uncharacterized protein from Acheta domesticus (House cricket).